The primary structure comprises 323 residues: Methionyl-tRNA formyltransferase (323 aa).

113 to 116 (SLLP) contributes to the (6S)-5,6,7,8-tetrahydrofolate binding site.

The protein belongs to the Fmt family.

It catalyses the reaction L-methionyl-tRNA(fMet) + (6R)-10-formyltetrahydrofolate = N-formyl-L-methionyl-tRNA(fMet) + (6S)-5,6,7,8-tetrahydrofolate + H(+). Attaches a formyl group to the free amino group of methionyl-tRNA(fMet). The formyl group appears to play a dual role in the initiator identity of N-formylmethionyl-tRNA by promoting its recognition by IF2 and preventing the misappropriation of this tRNA by the elongation apparatus. The polypeptide is Methionyl-tRNA formyltransferase (Nitrosococcus oceani (strain ATCC 19707 / BCRC 17464 / JCM 30415 / NCIMB 11848 / C-107)).